The sequence spans 181 residues: SAGA-associated factor 11 (181 aa).

Residues 93–114 form an SGF11-type zinc finger; it reads FNCMNCGRQIVAGRFAPHLEKC. The segment covering 116–125 has biased composition (basic residues); sequence GKGRKARAKT. The segment at 116–181 is disordered; that stretch reads GKGRKARAKT…FTVRENVKGD (66 aa). The span at 126-153 shows a compositional bias: low complexity; that stretch reads TRSTTAAQNRNARRSPNPRYSPYPNSAS.

It belongs to the SGF11 family. As to quaternary structure, component of a deubiquitination module (DUB module) formed by ENY2, SGF11, and UBP22 in Arabidopsis. Interacts directly with ENY2 and UBP22. Interacts with DDA1. Post-translationally, ubiquitinated in DET1-dependent manner. Ubiquitination probably leads to its subsequent proteasomal degradation.

The protein resides in the nucleus. The protein localises to the nucleoplasm. Component of a deubiquitination module (DUB module) that specifically deubiquinates monoubiquinated histone H2B (H2Bub). Does not seem to be a component of the TREX-2 complex. Seems to act independently of the SAGA multiprotein complex. The DUB module is responsible for the major H2Bub deubiquitinase activity in Arabidopsis. This Arabidopsis thaliana (Mouse-ear cress) protein is SAGA-associated factor 11.